We begin with the raw amino-acid sequence, 370 residues long: Sphingolipid delta(4)-desaturase (370 aa).

A run of 3 helical transmembrane segments spans residues 68–88, 92–112, and 128–148; these read VMGV…TPVF, FLTL…LAIH, and LFAV…FQPY. The Histidine box-1 motif lies at 112–116; sequence HELSH. Positions 149 to 153 match the Histidine box-2 motif; the sequence is HQLHH. A run of 3 helical transmembrane segments spans residues 173–193, 197–217, and 220–240; these read FLSS…FYAL, FITQ…QLIF, and VMVT…TFLA. The Histidine box-3 motif lies at 299-303; that stretch reads HNEHH.

Belongs to the fatty acid desaturase type 1 family. DEGS subfamily.

The protein resides in the membrane. The catalysed reaction is an N-acylsphinganine + 2 Fe(II)-[cytochrome b5] + O2 + 2 H(+) = an N-acylsphing-4-enine + 2 Fe(III)-[cytochrome b5] + 2 H2O. It functions in the pathway lipid metabolism; sphingolipid metabolism. Functionally, delta(4)-fatty-acid desaturase which introduces a double bond at the 4-position in the long-chain base (LCB) of ceramides. Required for the formation of the monounsaturated sphingoid base (E)-sphing-4-enine during glucosylceramide (GluCer) biosynthesis. In Candida albicans (strain SC5314 / ATCC MYA-2876) (Yeast), this protein is Sphingolipid delta(4)-desaturase.